A 106-amino-acid polypeptide reads, in one-letter code: UPF0145 protein (106 aa).

The protein belongs to the UPF0145 family.

The polypeptide is UPF0145 protein (Listeria grayi (Listeria murrayi)).